The primary structure comprises 69 residues: Photosystem I reaction center subunit IV (69 aa).

The protein belongs to the PsaE family.

Its subcellular location is the cellular thylakoid membrane. Functionally, stabilizes the interaction between PsaC and the PSI core, assists the docking of the ferredoxin to PSI and interacts with ferredoxin-NADP oxidoreductase. The chain is Photosystem I reaction center subunit IV from Prochlorococcus marinus (strain MIT 9515).